The primary structure comprises 245 residues: Endonuclease III (245 aa).

In terms of domain architecture, HhH spans Met-119–Gly-138. Residues Cys-198, Cys-205, Cys-208, and Cys-214 each contribute to the [4Fe-4S] cluster site.

It belongs to the Nth/MutY family. [4Fe-4S] cluster serves as cofactor.

It catalyses the reaction 2'-deoxyribonucleotide-(2'-deoxyribose 5'-phosphate)-2'-deoxyribonucleotide-DNA = a 3'-end 2'-deoxyribonucleotide-(2,3-dehydro-2,3-deoxyribose 5'-phosphate)-DNA + a 5'-end 5'-phospho-2'-deoxyribonucleoside-DNA + H(+). Its function is as follows. DNA repair enzyme that has both DNA N-glycosylase activity and AP-lyase activity. The DNA N-glycosylase activity releases various damaged pyrimidines from DNA by cleaving the N-glycosidic bond, leaving an AP (apurinic/apyrimidinic) site. The AP-lyase activity cleaves the phosphodiester bond 3' to the AP site by a beta-elimination, leaving a 3'-terminal unsaturated sugar and a product with a terminal 5'-phosphate. Has a preference for oxidized pyrimidines, such as thymine glycol (prefers 5S isomers) 5,6-dihydrouracil:G, 5-hydroxyuracil:G, 5-hydroxycytosine:G and urea:A. Cleaves ssDNA containing an AP site. The chain is Endonuclease III from Mycobacterium tuberculosis (strain ATCC 25618 / H37Rv).